Reading from the N-terminus, the 262-residue chain is 1-(5-phosphoribosyl)-5-[(5-phosphoribosylamino)methylideneamino] imidazole-4-carboxamide isomerase (262 aa).

The Proton acceptor role is filled by D8. D130 functions as the Proton donor in the catalytic mechanism.

Belongs to the HisA/HisF family.

It is found in the cytoplasm. It catalyses the reaction 1-(5-phospho-beta-D-ribosyl)-5-[(5-phospho-beta-D-ribosylamino)methylideneamino]imidazole-4-carboxamide = 5-[(5-phospho-1-deoxy-D-ribulos-1-ylimino)methylamino]-1-(5-phospho-beta-D-ribosyl)imidazole-4-carboxamide. Its pathway is amino-acid biosynthesis; L-histidine biosynthesis; L-histidine from 5-phospho-alpha-D-ribose 1-diphosphate: step 4/9. The chain is 1-(5-phosphoribosyl)-5-[(5-phosphoribosylamino)methylideneamino] imidazole-4-carboxamide isomerase from Chloroherpeton thalassium (strain ATCC 35110 / GB-78).